The chain runs to 295 residues: ATP synthase gamma chain (295 aa).

Belongs to the ATPase gamma chain family. F-type ATPases have 2 components, CF(1) - the catalytic core - and CF(0) - the membrane proton channel. CF(1) has five subunits: alpha(3), beta(3), gamma(1), delta(1), epsilon(1). CF(0) has three main subunits: a, b and c.

The protein localises to the cell inner membrane. Its function is as follows. Produces ATP from ADP in the presence of a proton gradient across the membrane. The gamma chain is believed to be important in regulating ATPase activity and the flow of protons through the CF(0) complex. This is ATP synthase gamma chain from Chlorobium phaeobacteroides (strain BS1).